We begin with the raw amino-acid sequence, 60 residues long: Histidine-rich metal-binding polypeptide (60 aa).

The interval 1-60 (MAHHEEQHGGHHHHHHHTHHHHYHGGEHHHHHHSSHHEEGCCSTSDSHHQEEGCCHGHHE) is disordered. The segment covering 10–35 (GHHHHHHHTHHHHYHGGEHHHHHHSS) has biased composition (basic residues). The span at 36-60 (HHEEGCCSTSDSHHQEEGCCHGHHE) shows a compositional bias: basic and acidic residues. 2 repeat units span residues 38–42 (EEGCC) and 51–55 (EEGCC). The 2 X 5 AA repeats of E-E-G-C-C stretch occupies residues 38-55 (EEGCCSTSDSHHQEEGCC).

Functionally, strongly binds nickel and zinc. Binds other metals less strongly: cobalt &gt; copper &gt; cadmium &gt; manganese. May act to increase, or at least to preserve, urease activity. Exact function is still unknown. The sequence is that of Histidine-rich metal-binding polypeptide (hpn) from Helicobacter pylori (strain J99 / ATCC 700824) (Campylobacter pylori J99).